The following is a 125-amino-acid chain: Fatty acid-binding protein, liver-type (125 aa).

It belongs to the calycin superfamily. Fatty-acid binding protein (FABP) family.

It localises to the cytoplasm. The protein is Fatty acid-binding protein, liver-type (fabp1) of Takifugu rubripes (Japanese pufferfish).